A 181-amino-acid polypeptide reads, in one-letter code: MHSELKVFSDQAPGRVEQHLTDKAAMARVLASAGIRYEQWQANQALSDDPQQDEVIQAYQADIDRLIADEGYQTVDVVSMVPDHPEKTAFRQKFLEEHRHSEDEVRFFVEGQGLFTLHINGKVYEVLCSKGDLISVPANTPHWFDMGPEPRFVAIRLFNNPDGWVANFTGSDIAQQFNRLA.

His-98, His-100, Glu-104, and His-142 together coordinate Fe(2+). His-98, His-100, Glu-104, and His-142 together coordinate Ni(2+).

Belongs to the acireductone dioxygenase (ARD) family. As to quaternary structure, monomer. Fe(2+) is required as a cofactor. Requires Ni(2+) as cofactor.

It carries out the reaction 1,2-dihydroxy-5-(methylsulfanyl)pent-1-en-3-one + O2 = 3-(methylsulfanyl)propanoate + CO + formate + 2 H(+). The catalysed reaction is 1,2-dihydroxy-5-(methylsulfanyl)pent-1-en-3-one + O2 = 4-methylsulfanyl-2-oxobutanoate + formate + 2 H(+). It participates in amino-acid biosynthesis; L-methionine biosynthesis via salvage pathway; L-methionine from S-methyl-5-thio-alpha-D-ribose 1-phosphate: step 5/6. Catalyzes 2 different reactions between oxygen and the acireductone 1,2-dihydroxy-3-keto-5-methylthiopentene (DHK-MTPene) depending upon the metal bound in the active site. Fe-containing acireductone dioxygenase (Fe-ARD) produces formate and 2-keto-4-methylthiobutyrate (KMTB), the alpha-ketoacid precursor of methionine in the methionine recycle pathway. Ni-containing acireductone dioxygenase (Ni-ARD) produces methylthiopropionate, carbon monoxide and formate, and does not lie on the methionine recycle pathway. The sequence is that of Acireductone dioxygenase from Alcanivorax borkumensis (strain ATCC 700651 / DSM 11573 / NCIMB 13689 / SK2).